The primary structure comprises 200 residues: NADH-quinone oxidoreductase subunit C (200 aa).

This sequence belongs to the complex I 30 kDa subunit family. As to quaternary structure, NDH-1 is composed of 14 different subunits. Subunits NuoB, C, D, E, F, and G constitute the peripheral sector of the complex.

It localises to the cell inner membrane. It carries out the reaction a quinone + NADH + 5 H(+)(in) = a quinol + NAD(+) + 4 H(+)(out). Its function is as follows. NDH-1 shuttles electrons from NADH, via FMN and iron-sulfur (Fe-S) centers, to quinones in the respiratory chain. The immediate electron acceptor for the enzyme in this species is believed to be ubiquinone. Couples the redox reaction to proton translocation (for every two electrons transferred, four hydrogen ions are translocated across the cytoplasmic membrane), and thus conserves the redox energy in a proton gradient. The protein is NADH-quinone oxidoreductase subunit C of Chelativorans sp. (strain BNC1).